A 249-amino-acid chain; its full sequence is Derlin-2 (249 aa).

Over 1 to 21 (MAQAVEEWYRQMPIITRSYLT) the chain is Cytoplasmic. Residues 22–42 (AAVVTTVGCTLEIISPYHLYL) form a helical membrane-spanning segment. The Lumenal portion of the chain corresponds to 43–96 (NPKLVVQHYEIWRLVTNFLYFRKMDLDFLFHMFFLARYCKLLEENSFRGRTADF). Residues 97–117 (FYMLLFGATVLTGIVLIGGMI) form a helical membrane-spanning segment. At 118-122 (PYISE) the chain is on the cytoplasmic side. Residues 123–143 (TFARILFLSNSLTFMMVYVWS) traverse the membrane as a helical segment. Residues 144-152 (KHNPFIHMS) are Lumenal-facing. Residues 153-173 (FLGLFTFTAAYLPWVLLGFSI) form a helical membrane-spanning segment. The Cytoplasmic portion of the chain corresponds to 174–249 (LVGSSTWVDL…GAMGADPQAQ (76 aa)).

This sequence belongs to the derlin family.

The protein localises to the endoplasmic reticulum membrane. Functionally, may be involved in the degradation process of specific misfolded endoplasmic reticulum (ER) luminal proteins. The sequence is that of Derlin-2 (DER2) from Oryza sativa subsp. japonica (Rice).